The primary structure comprises 453 residues: Probable acetylornithine aminotransferase, mitochondrial (453 aa).

Lysine 302 bears the N6-(pyridoxal phosphate)lysine mark.

It belongs to the class-III pyridoxal-phosphate-dependent aminotransferase family. It depends on pyridoxal 5'-phosphate as a cofactor.

The protein localises to the mitochondrion matrix. It catalyses the reaction N(2)-acetyl-L-ornithine + 2-oxoglutarate = N-acetyl-L-glutamate 5-semialdehyde + L-glutamate. Its pathway is amino-acid biosynthesis; L-arginine biosynthesis; N(2)-acetyl-L-ornithine from L-glutamate: step 4/4. The chain is Probable acetylornithine aminotransferase, mitochondrial (argD) from Dictyostelium discoideum (Social amoeba).